The primary structure comprises 253 residues: Indole-3-glycerol phosphate synthase (253 aa).

This sequence belongs to the TrpC family.

It catalyses the reaction 1-(2-carboxyphenylamino)-1-deoxy-D-ribulose 5-phosphate + H(+) = (1S,2R)-1-C-(indol-3-yl)glycerol 3-phosphate + CO2 + H2O. The protein operates within amino-acid biosynthesis; L-tryptophan biosynthesis; L-tryptophan from chorismate: step 4/5. In Bacillus cereus (strain G9842), this protein is Indole-3-glycerol phosphate synthase.